We begin with the raw amino-acid sequence, 570 residues long: Sulfite reductase [NADPH] hemoprotein beta-component (570 aa).

[4Fe-4S] cluster-binding residues include cysteine 434, cysteine 440, cysteine 479, and cysteine 483. Residue cysteine 483 participates in siroheme binding.

Belongs to the nitrite and sulfite reductase 4Fe-4S domain family. In terms of assembly, alpha(8)-beta(8). The alpha component is a flavoprotein, the beta component is a hemoprotein. The cofactor is siroheme. It depends on [4Fe-4S] cluster as a cofactor.

The enzyme catalyses hydrogen sulfide + 3 NADP(+) + 3 H2O = sulfite + 3 NADPH + 4 H(+). The protein operates within sulfur metabolism; hydrogen sulfide biosynthesis; hydrogen sulfide from sulfite (NADPH route): step 1/1. Component of the sulfite reductase complex that catalyzes the 6-electron reduction of sulfite to sulfide. This is one of several activities required for the biosynthesis of L-cysteine from sulfate. The protein is Sulfite reductase [NADPH] hemoprotein beta-component of Shigella boydii serotype 4 (strain Sb227).